The primary structure comprises 409 residues: Phosphoglycerate kinase (409 aa).

Substrate-binding positions include 23–25 (DIN), 63–66 (HQSR), arginine 120, and arginine 160. ATP is bound by residues glutamate 333 and 359-362 (GGHL).

It belongs to the phosphoglycerate kinase family. As to quaternary structure, monomer.

It is found in the cytoplasm. It catalyses the reaction (2R)-3-phosphoglycerate + ATP = (2R)-3-phospho-glyceroyl phosphate + ADP. The protein operates within carbohydrate degradation; glycolysis; pyruvate from D-glyceraldehyde 3-phosphate: step 2/5. The chain is Phosphoglycerate kinase (pgk) from Methanobacterium bryantii.